Consider the following 348-residue polypeptide: Ion-translocating oxidoreductase complex subunit D (348 aa).

3 helical membrane passes run 25 to 45, 68 to 88, and 124 to 144; these read ILAA…GTFI, PISP…IGVA, and AMAA…TWAA. T182 is subject to FMN phosphoryl threonine. 5 helical membrane-spanning segments follow: residues 211–231, 237–257, 263–283, 296–316, and 317–337; these read TGEG…FLLA, WHIS…GFGA, ASPL…FIAT, LLFG…GGYP, and DGVA…DYYI.

It belongs to the NqrB/RnfD family. The complex is composed of six subunits: RnfA, RnfB, RnfC, RnfD, RnfE and RnfG. Requires FMN as cofactor.

The protein resides in the cell inner membrane. Functionally, part of a membrane-bound complex that couples electron transfer with translocation of ions across the membrane. This is Ion-translocating oxidoreductase complex subunit D from Shewanella amazonensis (strain ATCC BAA-1098 / SB2B).